The sequence spans 1400 residues: ABC transporter G family member 30 (1400 aa).

An N-linked (GlcNAc...) asparagine glycan is attached at N116. The 274-residue stretch at 141–414 (LLSEFICSKK…FEEFGFKCPE (274 aa)) folds into the ABC transporter 1 domain. 174–181 (GPPGCGKT) contributes to the ATP binding site. N472 carries an N-linked (GlcNAc...) asparagine glycan. The 213-residue stretch at 492 to 704 (EMLKACSRRE…AEIGLTANEF (213 aa)) folds into the ABC transmembrane type-2 1 domain. A run of 7 helical transmembrane segments spans residues 510–530 (FIYL…MTVF), 553–573 (LFRL…RLGV), 582–602 (FYPA…LSVL), 628–648 (FLIL…IAAI), 652–672 (IIAS…FGGF), 679–699 (MPAW…EIGL), and 738–758 (TAFG…VLAL). The 246-residue stretch at 808-1053 (VTFQNVQYYI…VIEYFESFSG (246 aa)) folds into the ABC transporter 2 domain. 845–852 (GVSGAGKT) is an ATP binding site. N-linked (GlcNAc...) asparagine glycans are attached at residues N899 and N1040. An ABC transmembrane type-2 2 domain is found at 1125–1339 (VQLKACLWKQ…VLEGLLSSQY (215 aa)). Helical transmembrane passes span 1144-1164 (HNIT…LLFW), 1179-1199 (IFGS…AAVI), 1228-1248 (VLIE…IVYP), 1263-1283 (LYSI…MVAL), 1289-1309 (MAVT…GFVI), 1317-1337 (WWIW…LLSS), and 1372-1392 (VVAF…AFFM).

This sequence belongs to the ABC transporter superfamily. ABCG family. PDR (TC 3.A.1.205) subfamily. As to expression, confined to roots. In seeds, mainly expressed in the embryo and, to a lesser extent, in the endosperm.

The protein localises to the cell membrane. The enzyme catalyses abscisate(out) + ATP + H2O = abscisate(in) + ADP + phosphate + H(+). In terms of biological role, together with ABCG40, import into the embryo the abscisic acid (ABA) delivered from the endosperm via ABCG25 and ABCG31-mediated export to suppress radicle extension and subsequent embryonic growth. Involved in root secretion of phytochemicals (phenolics and sugars) which regulate soil microbiota, influencing both fungal and bacterial communities. May be a general defense protein. The sequence is that of ABC transporter G family member 30 from Arabidopsis thaliana (Mouse-ear cress).